Consider the following 969-residue polypeptide: Rab3 GTPase-activating protein catalytic subunit (969 aa).

The span at 532–549 (DDGKKSSSSDGARDRSRG) shows a compositional bias: basic and acidic residues. A disordered region spans residues 532 to 613 (DDGKKSSSSD…PEGRLQPHGT (82 aa)). Residues 550 to 572 (APEGAGPEGAGPAEAAGKSWDSW) show a composition bias toward low complexity. The segment covering 573–589 (SDSEDEFFECVSDTEEM) has biased composition (acidic residues). Over residues 590 to 608 (KEDKEEAENRSRSKPEGRL) the composition is skewed to basic and acidic residues.

The protein belongs to the Rab3-GAP catalytic subunit family. The Rab3 GTPase-activating complex is a heterodimer composed of rab3gap1 and rab3gap2. The Rab3 GTPase-activating complex interacts with DMXL2. Interacts with LMAN1.

It localises to the cytoplasm. It is found in the endoplasmic reticulum. Its subcellular location is the golgi apparatus. The protein resides in the cis-Golgi network. Catalytic subunit of the Rab3 GTPase-activating (Rab3GAP) complex composed of rab3gap1 and rab3gap2, which has GTPase-activating protein (GAP) activity towards various Rab3 subfamily members (RAB3A, RAB3B, RAB3C and RAB3D), RAB5A and RAB43, and guanine nucleotide exchange factor (GEF) activity towards RAB18. As part of the Rab3GAP complex, acts as a GAP for Rab3 proteins by converting active RAB3-GTP to the inactive form RAB3-GDP. Rab3 proteins are involved in regulated exocytosis of neurotransmitters and hormones. The Rab3GAP complex, acts as a GEF for RAB18 by promoting the conversion of inactive RAB18-GDP to the active form RAB18-GTP. Recruits and stabilizes RAB18 at the cis-Golgi membrane where RAB18 is most likely activated. Also involved in RAB18 recruitment at the endoplasmic reticulum (ER) membrane where it maintains proper ER structure. Required for normal eye and brain development. May participate in neurodevelopmental processes such as proliferation, migration and differentiation before synapse formation, and non-synaptic vesicular release of neurotransmitters. The protein is Rab3 GTPase-activating protein catalytic subunit (rab3gap1) of Danio rerio (Zebrafish).